A 283-amino-acid polypeptide reads, in one-letter code: 4-diphosphocytidyl-2-C-methyl-D-erythritol kinase (283 aa).

Lys10 is a catalytic residue. 95–105 (PVAAGLGGGSS) is a binding site for ATP. Asp137 is an active-site residue.

The protein belongs to the GHMP kinase family. IspE subfamily.

The catalysed reaction is 4-CDP-2-C-methyl-D-erythritol + ATP = 4-CDP-2-C-methyl-D-erythritol 2-phosphate + ADP + H(+). The protein operates within isoprenoid biosynthesis; isopentenyl diphosphate biosynthesis via DXP pathway; isopentenyl diphosphate from 1-deoxy-D-xylulose 5-phosphate: step 3/6. Its function is as follows. Catalyzes the phosphorylation of the position 2 hydroxy group of 4-diphosphocytidyl-2C-methyl-D-erythritol. The sequence is that of 4-diphosphocytidyl-2-C-methyl-D-erythritol kinase from Limosilactobacillus fermentum (strain NBRC 3956 / LMG 18251) (Lactobacillus fermentum).